Reading from the N-terminus, the 155-residue chain is 3-dehydroquinate dehydratase 1 (155 aa).

Tyr-28 acts as the Proton acceptor in catalysis. Substrate-binding residues include Asn-80, His-86, and Asp-93. Catalysis depends on His-106, which acts as the Proton donor. Substrate is bound by residues 107 to 108 (VT) and Arg-117.

This sequence belongs to the type-II 3-dehydroquinase family. Homododecamer.

It carries out the reaction 3-dehydroquinate = 3-dehydroshikimate + H2O. The protein operates within metabolic intermediate biosynthesis; chorismate biosynthesis; chorismate from D-erythrose 4-phosphate and phosphoenolpyruvate: step 3/7. In terms of biological role, catalyzes a trans-dehydration via an enolate intermediate. This chain is 3-dehydroquinate dehydratase 1 (aroQ1), found in Bradyrhizobium diazoefficiens (strain JCM 10833 / BCRC 13528 / IAM 13628 / NBRC 14792 / USDA 110).